The primary structure comprises 317 residues: Acetyl-coenzyme A carboxylase carboxyl transferase subunit alpha (317 aa).

The 262-residue stretch at 32–293 folds into the CoA carboxyltransferase C-terminal domain; the sequence is NLSEEIARLE…KRLLTSELQA (262 aa).

Belongs to the AccA family. Acetyl-CoA carboxylase is a heterohexamer composed of biotin carboxyl carrier protein (AccB), biotin carboxylase (AccC) and two subunits each of ACCase subunit alpha (AccA) and ACCase subunit beta (AccD).

The protein localises to the cytoplasm. It catalyses the reaction N(6)-carboxybiotinyl-L-lysyl-[protein] + acetyl-CoA = N(6)-biotinyl-L-lysyl-[protein] + malonyl-CoA. The protein operates within lipid metabolism; malonyl-CoA biosynthesis; malonyl-CoA from acetyl-CoA: step 1/1. Its function is as follows. Component of the acetyl coenzyme A carboxylase (ACC) complex. First, biotin carboxylase catalyzes the carboxylation of biotin on its carrier protein (BCCP) and then the CO(2) group is transferred by the carboxyltransferase to acetyl-CoA to form malonyl-CoA. The polypeptide is Acetyl-coenzyme A carboxylase carboxyl transferase subunit alpha (Legionella pneumophila (strain Paris)).